We begin with the raw amino-acid sequence, 318 residues long: Cytochrome c biogenesis protein CcsA (318 aa).

8 consecutive transmembrane segments (helical) span residues 17 to 37 (VLAL…ISFW), 45 to 65 (SAVV…QLVL), 75 to 95 (ISNL…AQLL), 104 to 124 (IVSA…SFAL), 149 to 169 (VIMC…AVLF), 224 to 244 (TITV…VWAN), 258 to 275 (TWAL…HTRF), and 287 to 307 (VAVA…LLGI).

This sequence belongs to the CcmF/CycK/Ccl1/NrfE/CcsA family. As to quaternary structure, may interact with ccs1.

It localises to the cellular thylakoid membrane. Required during biogenesis of c-type cytochromes (cytochrome c6 and cytochrome f) at the step of heme attachment. The protein is Cytochrome c biogenesis protein CcsA of Prochlorococcus marinus (strain MIT 9303).